The chain runs to 809 residues: BTB/POZ domain-containing protein At2g30600 (809 aa).

2 BTB domains span residues 211 to 273 and 351 to 420; these read SDTV…QILE and SDIK…NMED. Positions 466–537 constitute a BACK domain; the sequence is VVSSISSCKL…LMWCMKAEES (72 aa).

The protein operates within protein modification; protein ubiquitination. May act as a substrate-specific adapter of an E3 ubiquitin-protein ligase complex (CUL3-RBX1-BTB) which mediates the ubiquitination and subsequent proteasomal degradation of target proteins. This Arabidopsis thaliana (Mouse-ear cress) protein is BTB/POZ domain-containing protein At2g30600.